The primary structure comprises 374 residues: Multicilin (374 aa).

2 disordered regions span residues 18–72 and 84–105; these read CPNR…ALPA and CSSF…QSHS. The stretch at 168-216 forms a coiled coil; that stretch reads EQYWKEVADQNQRALGDALIENNQLHATLTQKQEEIASLKERNLQLKEL. Residues 284–306 form a disordered region; the sequence is LQSRDPKRLRLQPEPQSLDRRPG.

The protein belongs to the geminin family. Heterodimer (via coiled-coil domain) with GMNN (via coiled-coil domain); targets GMNN to the nucleus. Can form homodimers (in vitro, via coiled-coil domain), but these are much less stable than the heterodimer formed with GMNN.

It is found in the nucleus. In terms of biological role, transcription regulator specifically required for multiciliate cell differentiation. Acts in a multiprotein complex containing E2F4 and E2F5 that binds and activates genes required for centriole biogenesis. Required for the deuterosome-mediated acentriolar pathway. Plays a role in mitotic cell cycle progression by promoting cell cycle exit. Modulates GMNN activity by reducing its affinity for CDT1. This chain is Multicilin (MCIDAS), found in Bos taurus (Bovine).